Here is a 545-residue protein sequence, read N- to C-terminus: Probable acyl-activating enzyme 4 (545 aa).

Belongs to the ATP-dependent AMP-binding enzyme family. Expressed in roots, leaves, stems, flowers and developing seeds.

May act as an acid--thiol ligase that activates carboxylic acids by forming acyl-CoAs. The sequence is that of Probable acyl-activating enzyme 4 (AEE4) from Arabidopsis thaliana (Mouse-ear cress).